We begin with the raw amino-acid sequence, 142 residues long: Nucleoside diphosphate kinase (142 aa).

Lys11, Phe59, Arg87, Thr93, Arg104, and Asn114 together coordinate ATP. The active-site Pros-phosphohistidine intermediate is His117.

Belongs to the NDK family. In terms of assembly, homotetramer. The cofactor is Mg(2+).

It localises to the cytoplasm. The catalysed reaction is a 2'-deoxyribonucleoside 5'-diphosphate + ATP = a 2'-deoxyribonucleoside 5'-triphosphate + ADP. It carries out the reaction a ribonucleoside 5'-diphosphate + ATP = a ribonucleoside 5'-triphosphate + ADP. Functionally, major role in the synthesis of nucleoside triphosphates other than ATP. The ATP gamma phosphate is transferred to the NDP beta phosphate via a ping-pong mechanism, using a phosphorylated active-site intermediate. This is Nucleoside diphosphate kinase from Yersinia pseudotuberculosis serotype O:1b (strain IP 31758).